We begin with the raw amino-acid sequence, 320 residues long: Cilia- and flagella-associated protein 77 (320 aa).

The tract at residues 1 to 27 (MPEARSSGPDLTRWRKQQQPVRRTVSQ) is disordered. The segment covering 17–27 (QQQPVRRTVSQ) has biased composition (polar residues).

This sequence belongs to the CFAP77 family. Microtubule inner protein component of sperm flagellar doublet microtubules. As to expression, expressed in airway epithelial cells.

It is found in the cytoplasm. The protein resides in the cytoskeleton. The protein localises to the cilium axoneme. It localises to the flagellum axoneme. Its function is as follows. Microtubule inner protein (MIP) part of the dynein-decorated doublet microtubules (DMTs) in cilia axoneme, which is required for motile cilia beating. This Homo sapiens (Human) protein is Cilia- and flagella-associated protein 77.